The primary structure comprises 602 residues: 4-hydroxy-3-methylbut-2-en-1-yl diphosphate synthase (flavodoxin) (602 aa).

The [4Fe-4S] cluster site is built by C508, C511, C543, and E550.

The protein belongs to the IspG family. [4Fe-4S] cluster is required as a cofactor.

It catalyses the reaction (2E)-4-hydroxy-3-methylbut-2-enyl diphosphate + oxidized [flavodoxin] + H2O + 2 H(+) = 2-C-methyl-D-erythritol 2,4-cyclic diphosphate + reduced [flavodoxin]. The protein operates within isoprenoid biosynthesis; isopentenyl diphosphate biosynthesis via DXP pathway; isopentenyl diphosphate from 1-deoxy-D-xylulose 5-phosphate: step 5/6. Converts 2C-methyl-D-erythritol 2,4-cyclodiphosphate (ME-2,4cPP) into 1-hydroxy-2-methyl-2-(E)-butenyl 4-diphosphate. The sequence is that of 4-hydroxy-3-methylbut-2-en-1-yl diphosphate synthase (flavodoxin) from Chlamydia trachomatis serovar D (strain ATCC VR-885 / DSM 19411 / UW-3/Cx).